A 92-amino-acid polypeptide reads, in one-letter code: Large ribosomal subunit protein eL43 (92 aa).

The C4-type zinc-finger motif lies at 39–60; sequence CDFCGKYGMKRQAVGIWCCKGC.

This sequence belongs to the eukaryotic ribosomal protein eL43 family.

The sequence is that of Large ribosomal subunit protein eL43 (RPL37a) from Ostreococcus tauri.